We begin with the raw amino-acid sequence, 279 residues long: Ribosomal RNA large subunit methyltransferase E (279 aa).

Residues 1-10 (MSDDDQKPED) show a composition bias toward basic and acidic residues. The segment at 1 to 66 (MSDDDQKPED…MKKGGDARAA (66 aa)) is disordered. G136, W138, D154, D170, and D194 together coordinate S-adenosyl-L-methionine. Residue K234 is the Proton acceptor of the active site.

The protein belongs to the class I-like SAM-binding methyltransferase superfamily. RNA methyltransferase RlmE family.

It localises to the cytoplasm. The enzyme catalyses uridine(2552) in 23S rRNA + S-adenosyl-L-methionine = 2'-O-methyluridine(2552) in 23S rRNA + S-adenosyl-L-homocysteine + H(+). Functionally, specifically methylates the uridine in position 2552 of 23S rRNA at the 2'-O position of the ribose in the fully assembled 50S ribosomal subunit. This is Ribosomal RNA large subunit methyltransferase E from Maricaulis maris (strain MCS10) (Caulobacter maris).